The following is a 204-amino-acid chain: Putative t-SNARE coiled-coil homology domain-containing protein L657 (204 aa).

2 t-SNARE coiled-coil homology domains span residues 9–71 and 140–202; these read SDYY…MDHV and DNSR…IKHT. Residues 159 to 181 are a coiled coil; the sequence is VLEKQANDISNILDEQNNTLEII.

The chain is Putative t-SNARE coiled-coil homology domain-containing protein L657 from Acanthamoeba polyphaga (Amoeba).